We begin with the raw amino-acid sequence, 363 residues long: Putative glutamate--cysteine ligase 2-3 (363 aa).

This sequence belongs to the glutamate--cysteine ligase type 2 family. YbdK subfamily.

It catalyses the reaction L-cysteine + L-glutamate + ATP = gamma-L-glutamyl-L-cysteine + ADP + phosphate + H(+). Its function is as follows. ATP-dependent carboxylate-amine ligase which exhibits weak glutamate--cysteine ligase activity. The chain is Putative glutamate--cysteine ligase 2-3 from Rubrobacter xylanophilus (strain DSM 9941 / JCM 11954 / NBRC 16129 / PRD-1).